The following is a 1308-amino-acid chain: Spermatogenesis-associated protein 31F1B (1308 aa).

Residues Phe7–Ile27 form a helical membrane-spanning segment. 7 disordered regions span residues Ser464–Pro488, Ser627–Gly648, His844–Leu863, Pro902–Gly927, Phe1005–Lys1026, Gly1084–Lys1190, and Met1204–Gln1254. Over residues Pro465–Ser478 the composition is skewed to pro residues. Residues Met1107–Asp1117 show a composition bias toward acidic residues.

The protein belongs to the SPATA31 family.

It localises to the membrane. The polypeptide is Spermatogenesis-associated protein 31F1B (Mus musculus (Mouse)).